We begin with the raw amino-acid sequence, 429 residues long: 3-phosphoshikimate 1-carboxyvinyltransferase (429 aa).

3-phosphoshikimate is bound by residues Lys11, Ser12, and Arg16. A phosphoenolpyruvate-binding site is contributed by Lys11. Phosphoenolpyruvate is bound by residues Gly82 and Arg110. 3-phosphoshikimate is bound by residues Ser155, Gln157, Asp302, and Lys329. Residue Gln157 participates in phosphoenolpyruvate binding. The Proton acceptor role is filled by Asp302. Residues Arg333 and Arg385 each contribute to the phosphoenolpyruvate site.

This sequence belongs to the EPSP synthase family. In terms of assembly, monomer.

It localises to the cytoplasm. The catalysed reaction is 3-phosphoshikimate + phosphoenolpyruvate = 5-O-(1-carboxyvinyl)-3-phosphoshikimate + phosphate. It functions in the pathway metabolic intermediate biosynthesis; chorismate biosynthesis; chorismate from D-erythrose 4-phosphate and phosphoenolpyruvate: step 6/7. In terms of biological role, catalyzes the transfer of the enolpyruvyl moiety of phosphoenolpyruvate (PEP) to the 5-hydroxyl of shikimate-3-phosphate (S3P) to produce enolpyruvyl shikimate-3-phosphate and inorganic phosphate. This Helicobacter acinonychis (strain Sheeba) protein is 3-phosphoshikimate 1-carboxyvinyltransferase.